The sequence spans 397 residues: Elongation factor Tu 2 (397 aa).

The 197-residue stretch at 10–206 (KPHVNIGTIG…AIDTWIPEPV (197 aa)) folds into the tr-type G domain. A G1 region spans residues 19-26 (GHVDHGKT). 19–26 (GHVDHGKT) lines the GTP pocket. Thr26 is a Mg(2+) binding site. The tract at residues 61 to 65 (GITIS) is G2. The tract at residues 82-85 (DCPG) is G3. GTP is bound by residues 82 to 86 (DCPGH) and 137 to 140 (NKCD). Residues 137 to 140 (NKCD) form a G4 region. A G5 region spans residues 175-177 (SAL).

It belongs to the TRAFAC class translation factor GTPase superfamily. Classic translation factor GTPase family. EF-Tu/EF-1A subfamily. Monomer.

It is found in the cytoplasm. It carries out the reaction GTP + H2O = GDP + phosphate + H(+). Its function is as follows. GTP hydrolase that promotes the GTP-dependent binding of aminoacyl-tRNA to the A-site of ribosomes during protein biosynthesis. This chain is Elongation factor Tu 2, found in Alkaliphilus metalliredigens (strain QYMF).